We begin with the raw amino-acid sequence, 204 residues long: Small ribosomal subunit protein uS4 (204 aa).

Residues 92–157 enclose the S4 RNA-binding domain; the sequence is RRLDALVLRS…KPLFEVAREG (66 aa).

It belongs to the universal ribosomal protein uS4 family. In terms of assembly, part of the 30S ribosomal subunit. Contacts protein S5. The interaction surface between S4 and S5 is involved in control of translational fidelity.

In terms of biological role, one of the primary rRNA binding proteins, it binds directly to 16S rRNA where it nucleates assembly of the body of the 30S subunit. With S5 and S12 plays an important role in translational accuracy. In Streptomyces avermitilis (strain ATCC 31267 / DSM 46492 / JCM 5070 / NBRC 14893 / NCIMB 12804 / NRRL 8165 / MA-4680), this protein is Small ribosomal subunit protein uS4.